The following is a 94-amino-acid chain: Putative testis-specific prion protein (94 aa).

Residues 1–18 (MQHSLVFFFAVILHLSHL) form the signal peptide. N-linked (GlcNAc...) asparagine glycosylation occurs at asparagine 44.

Specifically expressed in adult testis.

It is found in the secreted. This Homo sapiens (Human) protein is Putative testis-specific prion protein (PRNT).